The sequence spans 591 residues: Probable translation initiation factor IF-2 (591 aa).

The region spanning 7-223 is the tr-type G domain; sequence LRTPIVCVMG…LLGLAQKFLE (217 aa). A G1 region spans residues 16–23; sequence GHVDHGKT. 16-23 provides a ligand contact to GTP; that stretch reads GHVDHGKT. A G2 region spans residues 41 to 45; sequence AITQH. The segment at 78–81 is G3; sequence DTPG. Residues 78–82 and 132–135 each bind GTP; these read DTPGH and NKID. The G4 stretch occupies residues 132 to 135; that stretch reads NKID. Residues 200 to 202 are G5; that stretch reads SAF.

This sequence belongs to the TRAFAC class translation factor GTPase superfamily. Classic translation factor GTPase family. IF-2 subfamily.

Functionally, function in general translation initiation by promoting the binding of the formylmethionine-tRNA to ribosomes. Seems to function along with eIF-2. The protein is Probable translation initiation factor IF-2 of Methanosarcina mazei (strain ATCC BAA-159 / DSM 3647 / Goe1 / Go1 / JCM 11833 / OCM 88) (Methanosarcina frisia).